Here is a 268-residue protein sequence, read N- to C-terminus: tRNA pseudouridine synthase A (268 aa).

Aspartate 52 acts as the Nucleophile in catalysis. Residue tyrosine 110 coordinates substrate.

The protein belongs to the tRNA pseudouridine synthase TruA family. Homodimer.

It catalyses the reaction uridine(38/39/40) in tRNA = pseudouridine(38/39/40) in tRNA. Functionally, formation of pseudouridine at positions 38, 39 and 40 in the anticodon stem and loop of transfer RNAs. The polypeptide is tRNA pseudouridine synthase A (Prochlorococcus marinus (strain MIT 9215)).